The sequence spans 214 residues: Thymidylate kinase (214 aa).

10–17 (GPDGAGKT) provides a ligand contact to ATP.

The protein belongs to the thymidylate kinase family.

It catalyses the reaction dTMP + ATP = dTDP + ADP. Phosphorylation of dTMP to form dTDP in both de novo and salvage pathways of dTTP synthesis. The chain is Thymidylate kinase from Latilactobacillus sakei subsp. sakei (strain 23K) (Lactobacillus sakei subsp. sakei).